A 180-amino-acid polypeptide reads, in one-letter code: Nucleoside triphosphate/diphosphate phosphatase (180 aa).

Arg26 acts as the Proton donor in catalysis. 6 residues coordinate Mg(2+): Asn90, Asp106, Asp108, Asp110, Asp123, and Glu126.

It belongs to the Ntdp family. Mg(2+) serves as cofactor.

The enzyme catalyses a ribonucleoside 5'-triphosphate + H2O = a ribonucleoside 5'-diphosphate + phosphate + H(+). It carries out the reaction a ribonucleoside 5'-diphosphate + H2O = a ribonucleoside 5'-phosphate + phosphate + H(+). Its function is as follows. Has nucleoside phosphatase activity towards nucleoside triphosphates and nucleoside diphosphates. This Staphylococcus aureus (strain MRSA252) protein is Nucleoside triphosphate/diphosphate phosphatase.